The sequence spans 539 residues: Nucleobase-ascorbate transporter 8 (539 aa).

The interval 1–20 is disordered; sequence MAGDGVENAKPPQKQEDLQP. 12 helical membrane-spanning segments follow: residues 44-64, 79-99, 101-121, 141-161, 167-187, 189-209, 229-249, 295-315, 368-388, 399-421, 433-453, and 470-490; these read ILLGFQHYLVMLGTTVLIPTM, LIQTLLFVSGINTLFQSFFGT, LPAVIGASYSYVPTTMSIVLA, IQGALIIASFLHILVGFSGLW, FLSPLSAVPLVAFSGFGLYEQ, FPMLAKCIEIGLPEIILLVIF, FAVIFSVVIVWLYAYILTIGG, IFAMMAASFVSLVESTGTYIA, VGSRRVIQVAAGFMIFFSILG, APIVAALYCLFFSYVGAGGLSLI, FILGFSIFMGLSIPQYFYQYT, and NIINVPFSSKAFVSGILAFFL.

The protein belongs to the nucleobase:cation symporter-2 (NCS2) (TC 2.A.40) family. Highly expressed in ovules, endosperm and embryo.

Its subcellular location is the cell membrane. The polypeptide is Nucleobase-ascorbate transporter 8 (NAT8) (Arabidopsis thaliana (Mouse-ear cress)).